The primary structure comprises 463 residues: Argininosuccinate lyase (463 aa).

Belongs to the lyase 1 family. Argininosuccinate lyase subfamily.

The protein localises to the cytoplasm. The catalysed reaction is 2-(N(omega)-L-arginino)succinate = fumarate + L-arginine. It functions in the pathway amino-acid biosynthesis; L-arginine biosynthesis; L-arginine from L-ornithine and carbamoyl phosphate: step 3/3. The polypeptide is Argininosuccinate lyase (Streptococcus pneumoniae serotype 2 (strain D39 / NCTC 7466)).